A 66-amino-acid polypeptide reads, in one-letter code: Beta-toxin Chui4 (66 aa).

Residues 1-66 (KEGYLVELGT…VWPLKNKTCK (66 aa)) enclose the LCN-type CS-alpha/beta domain. Disulfide bonds link C12–C65, C16–C41, C25–C46, and C29–C48.

It belongs to the long (4 C-C) scorpion toxin superfamily. Sodium channel inhibitor family. Beta subfamily. As to expression, expressed by the venom gland.

Its subcellular location is the secreted. In terms of biological role, beta toxins bind voltage-independently at site-4 of sodium channels (Nav) and shift the voltage of activation toward more negative potentials thereby affecting sodium channel activation and promoting spontaneous and repetitive firing. Acts on human sodium channel Nav1.6/SCN8A. Also able to weakly shift the activation curves of human Nav1.2/SCN2A and Nav1.4/SCN4A. This chain is Beta-toxin Chui4, found in Centruroides huichol (Scorpion).